A 146-amino-acid chain; its full sequence is Vascular endothelial growth factor A (146 aa).

Residues 1–26 form the signal peptide; sequence MNFLLSWVHWSLALLLYLHHAKWSQA. Intrachain disulfides connect Cys-51/Cys-93, Cys-82/Cys-127, and Cys-86/Cys-129. N-linked (GlcNAc...) asparagine glycosylation occurs at Asn-100.

The protein belongs to the PDGF/VEGF growth factor family. In terms of assembly, homodimer; disulfide-linked. Also found as heterodimer with PGF. Interacts with NRP1. Interacts with isoform 2 of BSG. Interacts with CD82; this interaction inhibits VEGFA-mediated signaling pathway.

Growth factor active in angiogenesis, vasculogenesis and endothelial cell growth. Induces endothelial cell proliferation, promotes cell migration, inhibits apoptosis and induces permeabilization of blood vessels. Binds to the FLT1/VEGFR1 and KDR/VEGFR2 receptors, heparan sulfate and heparin. Binding to NRP1 receptor initiates a signaling pathway needed for motor neuron axon guidance and cell body migration, including for the caudal migration of facial motor neurons from rhombomere 4 to rhombomere 6 during embryonic development. Also binds the DEAR/FBXW7-AS1 receptor. This chain is Vascular endothelial growth factor A (VEGFA), found in Ovis aries (Sheep).